The sequence spans 115 residues: NADH-ubiquinone oxidoreductase chain 3 (115 aa).

3 helical membrane-spanning segments follow: residues 4 to 24, 55 to 75, and 87 to 107; these read LMVM…AFWL, FFLV…LLPL, and MMLT…YEWM.

This sequence belongs to the complex I subunit 3 family. As to quaternary structure, core subunit of respiratory chain NADH dehydrogenase (Complex I) which is composed of 45 different subunits. Interacts with TMEM186. Interacts with TMEM242.

It is found in the mitochondrion inner membrane. It catalyses the reaction a ubiquinone + NADH + 5 H(+)(in) = a ubiquinol + NAD(+) + 4 H(+)(out). Its function is as follows. Core subunit of the mitochondrial membrane respiratory chain NADH dehydrogenase (Complex I) which catalyzes electron transfer from NADH through the respiratory chain, using ubiquinone as an electron acceptor. Essential for the catalytic activity of complex I. The sequence is that of NADH-ubiquinone oxidoreductase chain 3 from Peromyscus mexicanus (Mexican deer mouse).